The chain runs to 211 residues: ATP-dependent dethiobiotin synthetase BioD 2 (211 aa).

13 to 18 lines the ATP pocket; it reads DIGKTI. T17 lines the Mg(2+) pocket. K38 is an active-site residue. T42 serves as a coordination point for substrate. ATP contacts are provided by residues D50, 115 to 118, and 175 to 176; these read EGAG and NT. Mg(2+) contacts are provided by D50 and E115.

This sequence belongs to the dethiobiotin synthetase family. In terms of assembly, homodimer. The cofactor is Mg(2+).

It is found in the cytoplasm. It catalyses the reaction (7R,8S)-7,8-diammoniononanoate + CO2 + ATP = (4R,5S)-dethiobiotin + ADP + phosphate + 3 H(+). It participates in cofactor biosynthesis; biotin biosynthesis; biotin from 7,8-diaminononanoate: step 1/2. Functionally, catalyzes a mechanistically unusual reaction, the ATP-dependent insertion of CO2 between the N7 and N8 nitrogen atoms of 7,8-diaminopelargonic acid (DAPA, also called 7,8-diammoniononanoate) to form a ureido ring. The chain is ATP-dependent dethiobiotin synthetase BioD 2 from Haemophilus ducreyi (strain 35000HP / ATCC 700724).